Consider the following 483-residue polypeptide: Auxin transporter-like protein 2 (483 aa).

Over 1-53 the chain is Cytoplasmic; sequence MENGEKAAETVVVGNYVEMEKDGKALDIKSKLSDMFWHGGSAYDAWFSCASNQ. Residues 54–71 form a helical membrane-spanning segment; it reads VAQVLLTLPYSFSQLGML. Topologically, residues 72–73 are extracellular; sequence SG. A helical transmembrane segment spans residues 74–94; sequence ILFQLFYGILGSWTAYLISIL. Over 95-130 the chain is Cytoplasmic; sequence YVEYRTRKEREKVNFRNHVIQWFEVLDGLLGKHWRN. Residues 131–151 form a helical membrane-spanning segment; it reads VGLAFNCTFLLFGSVIQLIAC. Over 152-166 the chain is Extracellular; sequence ASNIYYINDNLDKRT. Residues 167 to 187 traverse the membrane as a helical segment; it reads WTYIFGACCATTVFIPSFHNY. Residues 188 to 190 lie on the Cytoplasmic side of the membrane; sequence RIW. Residues 191–211 form a helical membrane-spanning segment; that stretch reads SFLGLLMTTYTAWYLTIASIL. Residues 212–226 are Extracellular-facing; the sequence is HGQVEGVKHSGPSKL. A helical membrane pass occupies residues 227-247; the sequence is VLYFTGATNILYTFGGHAVTV. Residues 248–261 lie on the Cytoplasmic side of the membrane; that stretch reads EIMHAMWKPQKFKS. A helical transmembrane segment spans residues 262 to 282; it reads IYLFATLYVLTLTLPSASAVY. At 283–306 the chain is on the extracellular side; sequence WAFGDLLLNHSNAFALLPKNLYRD. Asparagine 291 carries an N-linked (GlcNAc...) asparagine glycan. The chain crosses the membrane as a helical span at residues 307–327; sequence FAVVLMLIHQFITFGFACTPL. Residues 328–350 are Cytoplasmic-facing; sequence YFVWEKLIGMHECRSMCKRAAAR. Residues 351 to 371 form a helical membrane-spanning segment; sequence LPVVIPIWFLAIIFPFFGPIN. At 372-374 the chain is on the extracellular side; it reads STV. A helical membrane pass occupies residues 375–395; that stretch reads GSLLVSFTVYIIPALAHIFTF. The Cytoplasmic portion of the chain corresponds to 396 to 422; that stretch reads RSSAARENAVEQPPRFLGRWTGAFTIN. A helical transmembrane segment spans residues 423-443; the sequence is AFIVVWVFIVGFGFGGWASMI. At 444 to 483 the chain is on the extracellular side; it reads NFVHQIDTFGLFTKCYQCPPPVMVSPPPISHPHFNHTHGL. N-linked (GlcNAc...) asparagine glycosylation occurs at asparagine 478.

Belongs to the amino acid/polyamine transporter 2 family. Amino acid/auxin permease (AAAP) (TC 2.A.18.1) subfamily.

The protein localises to the cell membrane. Carrier protein involved in proton-driven auxin influx. Mediates the formation of auxin gradient from developing leaves (site of auxin biosynthesis) to tips by contributing to the loading of auxin in vascular tissues and facilitating acropetal (base to tip) auxin transport within inner tissues of the root apex, and basipetal (tip to base) auxin transport within outer tissues of the root apex. The protein is Auxin transporter-like protein 2 (LAX2) of Arabidopsis thaliana (Mouse-ear cress).